A 938-amino-acid chain; its full sequence is MSDYKKTLQLPETKFPMKANLTQREPEMLRKWEKDDAYGAMVRASGQQGTYVLHDGPPYANGNIHMGHALNKILKDIIVKSRNLQGFKAEYVPGWDCHGLPIELKVEHELGEKKRTMPAHAVRKRCRQYAEKYLDIQRKEFKRLGVFGAWDKPYVTMHPSYEAATARELGNFAAKGGLVRSKKPIYWCCSCQTALAEAEVEYHDHTSPSVHVRFPLRDPRVAEVLPGVDPAHAYIVIWTTTPWTLPDNMAVAVHPDFDYVVVRHGGDFHIVAEGLLEACLKAFKWDEHEVVARIGGRALEGLKATHPFYDRPSPIVLADYVTLESGTGCVHTAPGHGREDYETGLRYGLDIYSPLTDEGRYLDCVEFFAGMTIFEANPKVIEKLREVGNLLAEGRITHSYPHCWRCKKPVIFRATTQWFIAMERNDLRQKALDAIRDDVRWIPSWGQERIHNMIEFRPDWCISRQRMWGVPIVALLCEDCGEAWNDADWMRDIAERFAKHATGCDYWYETDLSDIVPAGLRCPKCGGDHWKKETDILDVWFDSGTSFAAVVEQREECGFPADLYLEGSDQHRGWFHSSLLASIGTRGVPPYRSVLTHGYVVDGDGRKMSKSVGNVVAPQEIIDKHGAEVLRLWVASVDYREDIRISEEILNRLVDAYRRIRNTCRYLLGNISDLTPETMVPFEAMDPLDRFALDLASRAHERIQDAYTEYEFHKVFHTLHNLCVTDLSAFYLDILKDRLYSSAADSHARRSAQTALYRILMLMVRDMAPVLSFTAEEVFGYVPAALRPDVISVFALPATDAPAFTLDTTSRAAWEKLLAVRSETTKAIEPLRKSGEVGHSLDTHVTLFADPSLKATLEGLGSDLRAMFIVSRLEVMNLADAPADAWTSEELPELRVAVRKAEGEKCERCWIISADLGTDAAHPTLCPRCTAVLTGTGA.

Positions 58–68 match the 'HIGH' region motif; sequence PYANGNIHMGH. Glutamate 566 is an L-isoleucyl-5'-AMP binding site. Residues 607–611 carry the 'KMSKS' region motif; the sequence is KMSKS. Lysine 610 serves as a coordination point for ATP. Residues cysteine 906, cysteine 909, cysteine 926, and cysteine 929 each coordinate Zn(2+).

The protein belongs to the class-I aminoacyl-tRNA synthetase family. IleS type 1 subfamily. In terms of assembly, monomer. The cofactor is Zn(2+).

The protein localises to the cytoplasm. The catalysed reaction is tRNA(Ile) + L-isoleucine + ATP = L-isoleucyl-tRNA(Ile) + AMP + diphosphate. Catalyzes the attachment of isoleucine to tRNA(Ile). As IleRS can inadvertently accommodate and process structurally similar amino acids such as valine, to avoid such errors it has two additional distinct tRNA(Ile)-dependent editing activities. One activity is designated as 'pretransfer' editing and involves the hydrolysis of activated Val-AMP. The other activity is designated 'posttransfer' editing and involves deacylation of mischarged Val-tRNA(Ile). The polypeptide is Isoleucine--tRNA ligase (Nitratidesulfovibrio vulgaris (strain DP4) (Desulfovibrio vulgaris)).